We begin with the raw amino-acid sequence, 213 residues long: Orotate phosphoribosyltransferase (213 aa).

Lys-26 serves as a coordination point for 5-phospho-alpha-D-ribose 1-diphosphate. Residue 34–35 (FF) coordinates orotate. Residues 72–73 (YK), Arg-99, Lys-100, Lys-103, His-105, and 124–132 (DDVITAGTA) each bind 5-phospho-alpha-D-ribose 1-diphosphate. Residues Thr-128 and Arg-156 each coordinate orotate.

This sequence belongs to the purine/pyrimidine phosphoribosyltransferase family. PyrE subfamily. In terms of assembly, homodimer. Requires Mg(2+) as cofactor.

The catalysed reaction is orotidine 5'-phosphate + diphosphate = orotate + 5-phospho-alpha-D-ribose 1-diphosphate. It functions in the pathway pyrimidine metabolism; UMP biosynthesis via de novo pathway; UMP from orotate: step 1/2. Catalyzes the transfer of a ribosyl phosphate group from 5-phosphoribose 1-diphosphate to orotate, leading to the formation of orotidine monophosphate (OMP). This is Orotate phosphoribosyltransferase from Thioalkalivibrio sulfidiphilus (strain HL-EbGR7).